A 117-amino-acid chain; its full sequence is Large ribosomal subunit protein bL20 (117 aa).

It belongs to the bacterial ribosomal protein bL20 family.

Its function is as follows. Binds directly to 23S ribosomal RNA and is necessary for the in vitro assembly process of the 50S ribosomal subunit. It is not involved in the protein synthesizing functions of that subunit. The chain is Large ribosomal subunit protein bL20 from Rickettsia typhi (strain ATCC VR-144 / Wilmington).